We begin with the raw amino-acid sequence, 201 residues long: Large ribosomal subunit protein uL4 (201 aa).

Positions 43 to 73 are disordered; the sequence is TRAQKTRSEVSGGGAKPWRQKGTGRARAGTT.

It belongs to the universal ribosomal protein uL4 family. As to quaternary structure, part of the 50S ribosomal subunit.

One of the primary rRNA binding proteins, this protein initially binds near the 5'-end of the 23S rRNA. It is important during the early stages of 50S assembly. It makes multiple contacts with different domains of the 23S rRNA in the assembled 50S subunit and ribosome. Functionally, forms part of the polypeptide exit tunnel. The chain is Large ribosomal subunit protein uL4 from Colwellia psychrerythraea (strain 34H / ATCC BAA-681) (Vibrio psychroerythus).